A 371-amino-acid chain; its full sequence is S-adenosylmethionine:tRNA ribosyltransferase-isomerase (371 aa).

The protein belongs to the QueA family. As to quaternary structure, monomer.

The protein resides in the cytoplasm. The enzyme catalyses 7-aminomethyl-7-carbaguanosine(34) in tRNA + S-adenosyl-L-methionine = epoxyqueuosine(34) in tRNA + adenine + L-methionine + 2 H(+). Its pathway is tRNA modification; tRNA-queuosine biosynthesis. Its function is as follows. Transfers and isomerizes the ribose moiety from AdoMet to the 7-aminomethyl group of 7-deazaguanine (preQ1-tRNA) to give epoxyqueuosine (oQ-tRNA). The polypeptide is S-adenosylmethionine:tRNA ribosyltransferase-isomerase (Rickettsia akari (strain Hartford)).